Reading from the N-terminus, the 213-residue chain is Redox-sensing transcriptional repressor Rex (213 aa).

A DNA-binding region (H-T-H motif) is located at residues 18-57 (LYYRFLKNLHASGKQRVSSAELSEAVKVDPATIRRDFSYF). 92 to 97 (GVGNLG) serves as a coordination point for NAD(+).

Belongs to the transcriptional regulatory Rex family. As to quaternary structure, homodimer.

The protein resides in the cytoplasm. Modulates transcription in response to changes in cellular NADH/NAD(+) redox state. This Geobacillus kaustophilus (strain HTA426) protein is Redox-sensing transcriptional repressor Rex.